The following is a 652-amino-acid chain: Translation factor guf1, mitochondrial (652 aa).

The transit peptide at 1-44 (MSIFRLSRTFSLETCLKSSSFKIRWRFFSVSYASRKLASEDNKP) directs the protein to the mitochondrion. The tr-type G domain occupies 56–237 (NRVRNWAVIA…EIIQKIPPPK (182 aa)). GTP is bound by residues 65–72 (AHIDHGKS), 130–134 (DTPGH), and 184–187 (NKVD).

The protein belongs to the TRAFAC class translation factor GTPase superfamily. Classic translation factor GTPase family. LepA subfamily.

It is found in the mitochondrion inner membrane. It carries out the reaction GTP + H2O = GDP + phosphate + H(+). Promotes mitochondrial protein synthesis. May act as a fidelity factor of the translation reaction, by catalyzing a one-codon backward translocation of tRNAs on improperly translocated ribosomes. Binds to mitochondrial ribosomes in a GTP-dependent manner. The protein is Translation factor guf1, mitochondrial (guf1) of Schizosaccharomyces pombe (strain 972 / ATCC 24843) (Fission yeast).